The chain runs to 152 residues: Putative pre-16S rRNA nuclease (152 aa).

Belongs to the YqgF nuclease family.

It is found in the cytoplasm. Its function is as follows. Could be a nuclease involved in processing of the 5'-end of pre-16S rRNA. The chain is Putative pre-16S rRNA nuclease from Nitrosococcus oceani (strain ATCC 19707 / BCRC 17464 / JCM 30415 / NCIMB 11848 / C-107).